Here is a 295-residue protein sequence, read N- to C-terminus: Nuclear transcription factor Y subunit A-2 (295 aa).

The short motif at 139–165 is the Subunit association domain (SAD) element; that stretch reads YVNSKQYHGIIRRRQSRAKAAAVLDQK. Positions 173–198 form a DNA-binding region, NFYA/HAP2-type; that stretch reads KPYMHHSRHLHALRRPRGSGGRFLNT. Over residues 178 to 189 the composition is skewed to basic residues; it reads HSRHLHALRRPR. Positions 178-244 are disordered; it reads HSRHLHALRR…VVHPENGTMN (67 aa). The span at 197–209 shows a compositional bias: polar residues; the sequence is NTKSQNLENSGTN. Low complexity predominate over residues 216–233; it reads SMQIQSQPKPQQSNSQNS.

This sequence belongs to the NFYA/HAP2 subunit family. In terms of assembly, heterotrimeric transcription factor composed of three components, NF-YA, NF-YB and NF-YC. NF-YB and NF-YC must interact and dimerize for NF-YA association and DNA binding. Component of a heat stress-inducible transcriptional complex with NF-YA and NF-YB subunits made, at least, of NFYA2, NFYB3 and DPB3-1 in cooperation with DREB2A. In terms of tissue distribution, ubiquitous. Expressed in seedlings, roots, petioles, hypocotyls, reproductive organ tissues and leaves.

It is found in the nucleus. Its function is as follows. Stimulates the transcription of various genes by recognizing and binding to a CCAAT motif in promoters. Promotes the expression of heat stress-inducible genes by contributing to the formation of a heat stress-specific transcriptional complex with NF-Y subunits (e.g. DPB3-1, NF-YA2 and NF-YB3) and DREB2A at the promoter of target genes, thus promoting heat tolerance. The polypeptide is Nuclear transcription factor Y subunit A-2 (Arabidopsis thaliana (Mouse-ear cress)).